A 284-amino-acid chain; its full sequence is 2-dehydro-3-deoxyphosphooctonate aldolase (284 aa).

It belongs to the KdsA family.

The protein localises to the cytoplasm. The enzyme catalyses D-arabinose 5-phosphate + phosphoenolpyruvate + H2O = 3-deoxy-alpha-D-manno-2-octulosonate-8-phosphate + phosphate. Its pathway is carbohydrate biosynthesis; 3-deoxy-D-manno-octulosonate biosynthesis; 3-deoxy-D-manno-octulosonate from D-ribulose 5-phosphate: step 2/3. The protein operates within bacterial outer membrane biogenesis; lipopolysaccharide biosynthesis. This Photobacterium profundum (strain SS9) protein is 2-dehydro-3-deoxyphosphooctonate aldolase.